Consider the following 558-residue polypeptide: GPI mannosyltransferase 3 (558 aa).

Helical transmembrane passes span 53–73 (GLRS…LKLL), 81–101 (VWFA…VSVF), 164–184 (AYCG…LLTL), and 190–210 (VPFL…AVVL). An N-linked (GlcNAc...) asparagine glycan is attached at Asn220. A helical membrane pass occupies residues 234–254 (IVLTGLIVLVAVLGGVMVLDY). The N-linked (GlcNAc...) asparagine glycan is linked to Asn275. 4 consecutive transmembrane segments (helical) span residues 292 to 312 (VLVG…LVLW), 323 to 343 (PVLG…LIDH), 348 to 368 (FVFV…VRWS), and 372 to 392 (AVVV…IYLM).

Belongs to the glycosyltransferase 22 family. PIGB subfamily.

It localises to the endoplasmic reticulum membrane. The protein operates within glycolipid biosynthesis; glycosylphosphatidylinositol-anchor biosynthesis. Its function is as follows. Mannosyltransferase involved in glycosylphosphatidylinositol-anchor biosynthesis. Transfers the third alpha-1,2-mannose to Man2-GlcN-acyl-PI during GPI precursor assembly. This is GPI mannosyltransferase 3 (GPI10) from Trypanosoma brucei brucei.